Here is a 241-residue protein sequence, read N- to C-terminus: MLFKSLLLLSVYAVTCYGQSKVPVYVYYESLCPDSARFINEQLYPVAKELKKNLELHLVPFGKSSYTTQGSDVMFTCHHGENECYGNKVHACAIQHIQGNSYQPNISKEDLTLDYVNCLMHRAQLKDGAFPTKRCADEVKIDQWQAIMDCANSTEGSQLLKQHGDVTNKLQSPLKSVPTVAFKQTYDDELQKLSVSSFRHALCKNLSPQPVECLDLPSTGSAISSLGMIVTVVAVLISRLL.

An N-terminal signal peptide occupies residues 1–18 (MLFKSLLLLSVYAVTCYG). N-linked (GlcNAc...) asparagine glycans are attached at residues Asn105 and Asn152. A helical transmembrane segment spans residues 218–235 (STGSAISSLGMIVTVVAV).

This sequence belongs to the GILT family. As to expression, salivary gland (at protein level). Low-level expression in midgut (at protein level). Expressed in head and leg tissues. Ovary. Fat body. (Microbial infection) Detected with Plasmodium berghei sporozoites isolated from the saliva of infected Anopheles gambiae mosquitoes (at protein level).

It is found in the membrane. In terms of biological role, required for normal development of ovary and testis. Functionally, (Microbial infection) Interacts with the surface of Plasmodium berghei sporozoites. Reduces P.berghei sporozoite cell traversal activity and transmission. Limits the motility of P.berghei sporozoites. Decreases the levels of host liver infection by P.berghei sporozoites. Does not affect P.berghei sporozoite viability. Indirectly promotes P.berghei survival in mosquitoes by influencing ovarian development and the subsequent production of 20-hydroxyecdysone and vitellogenin, which, in turn, modulates TEP1-dependent parasite killing. Promotes P.berghei infection in mosquitoes, most likely impacting the oocyst stage of parasite development. (Microbial infection) Promotes Plasmodium falciparum survival in mosquitoes. The polypeptide is Gamma-interferon-inducible lysosomal thiol reductase-like protein (Anopheles gambiae (African malaria mosquito)).